We begin with the raw amino-acid sequence, 321 residues long: Lipoyl synthase (321 aa).

[4Fe-4S] cluster contacts are provided by Cys-68, Cys-73, Cys-79, Cys-94, Cys-98, Cys-101, and Ser-308. The Radical SAM core domain occupies 80–297 (FNHGTATFMI…KDYAEEIGFT (218 aa)).

Belongs to the radical SAM superfamily. Lipoyl synthase family. It depends on [4Fe-4S] cluster as a cofactor.

It localises to the cytoplasm. The catalysed reaction is [[Fe-S] cluster scaffold protein carrying a second [4Fe-4S](2+) cluster] + N(6)-octanoyl-L-lysyl-[protein] + 2 oxidized [2Fe-2S]-[ferredoxin] + 2 S-adenosyl-L-methionine + 4 H(+) = [[Fe-S] cluster scaffold protein] + N(6)-[(R)-dihydrolipoyl]-L-lysyl-[protein] + 4 Fe(3+) + 2 hydrogen sulfide + 2 5'-deoxyadenosine + 2 L-methionine + 2 reduced [2Fe-2S]-[ferredoxin]. The protein operates within protein modification; protein lipoylation via endogenous pathway; protein N(6)-(lipoyl)lysine from octanoyl-[acyl-carrier-protein]: step 2/2. In terms of biological role, catalyzes the radical-mediated insertion of two sulfur atoms into the C-6 and C-8 positions of the octanoyl moiety bound to the lipoyl domains of lipoate-dependent enzymes, thereby converting the octanoylated domains into lipoylated derivatives. This chain is Lipoyl synthase, found in Shewanella loihica (strain ATCC BAA-1088 / PV-4).